Consider the following 161-residue polypeptide: Pleiotrophin-B (161 aa).

Positions 1–23 are cleaved as a signal peptide; that stretch reads MHHQHGLFMLALLAFLLVMTVLG. Intrachain disulfides connect cysteine 41–cysteine 70, cysteine 49–cysteine 79, cysteine 56–cysteine 83, cysteine 93–cysteine 125, and cysteine 103–cysteine 135. Chondroitin sulfate binding regions lie at residues 86–93 and 117–125; these read KKQFGAEC and KRALHNAEC. Residues 136–161 are disordered; sequence GKVTKPKLQESKKKKKEGKNKEKLLD. The tract at residues 141–161 is chondroitin sulfate A binding; that stretch reads PKLQESKKKKKEGKNKEKLLD.

The protein belongs to the pleiotrophin family. In terms of tissue distribution, expressed in high levels in brain and eye. Lower levels in bone. In the tailbud embryo stage, it is expressed exclusively in the central nervous system, especially in the hind region of the brain.

The protein resides in the secreted. Functionally, secreted growth factor that mediates its signal through cell-surface proteoglycan and non-proteoglycan receptors. Binds cell-surface proteoglycan receptor via their chondroitin sulfate (CS) groups. Thereby regulates many processes like cell proliferation, cell survival, cell growth, cell differentiation and cell migration. Has antibacterial activity against both Gram-positive and Gram-negative bacteria. The sequence is that of Pleiotrophin-B (ptn-b) from Xenopus laevis (African clawed frog).